The following is a 3660-amino-acid chain: Dystrophin (3660 aa).

The tract at residues 1–244 (MSAHVLWYEE…YVTSLFQVLP (244 aa)) is actin-binding. Calponin-homology (CH) domains lie at 19–123 (DVQK…LHWQ) and 138–244 (TNSE…QVLP). Spectrin repeat units lie at residues 341-449 (MDLD…NLHK), 450-558 (ILMD…LLQD), 561-669 (RKWQ…QVSQ), 721-830 (EIRK…WLEY), 832-936 (NSII…QLQT), 945-1047 (RYKD…KLED), 1050-1156 (TKLQ…ALKG), 1159-1265 (DKTV…TLEE), 1268-1369 (ACWH…SLEQ), 1470-1570 (EQRL…ELEK), 1573-1678 (KLSR…LLME), 1681-1782 (KHME…FIPL), 1879-1981 (HQWY…TVLE), 2013-2103 (LSEV…RFDK), 2106-2211 (EKWR…RIEE), 2214-2321 (NILS…EIEI), 2472-2574 (FNKA…QLHE), 2577-2683 (KDST…ALES), 2686-2799 (LMLQ…HLEA), 2802-2904 (DQWK…LRRQ), 2906-2928 (DDVR…KIDD), and 2931-3037 (ERLQ…QLHE). The region spanning 3052–3085 (TSVQGPWERAISPNKVPYYINHETQTTCWDHPKM) is the WW domain. A ZZ-type; degenerate zinc finger spans residues 3305 to 3361 (KHQAKCNICKECPIIGFRYRSLKHFNYDICQSCFFSGRVAKGHKMHYPMVEYCTPTT). Zn(2+) contacts are provided by cysteine 3310, cysteine 3313, cysteine 3334, and cysteine 3337. Disordered stretches follow at residues 3503–3526 (KQQH…VSPQ) and 3575–3660 (PQAD…EATM). Composition is skewed to polar residues over residues 3582 to 3601 (NGTT…SSQP) and 3637 to 3647 (QLNNSFPSSRG).

The protein resides in the cell membrane. It localises to the sarcolemma. The protein localises to the cytoplasm. Its subcellular location is the cytoskeleton. It is found in the postsynaptic cell membrane. Its function is as follows. May play a role in anchoring the cytoskeleton to the plasma membrane. In Gallus gallus (Chicken), this protein is Dystrophin (DMD).